The sequence spans 430 residues: MEKVLIKHLGNYAGQEVLIKGWLYNKRSSGKICFLIVRDGTGLVQGVVEKKAAGEDLFSLAGNITQESSLMLRGTVREEPRAPGGFEIQVTGLEIVHMAEPYPISLKEHGVDFLAERRHLWIRTPRQSAILRIRSELEKGCRDFFEERDFVLADAPIITPTACEGTTNLFEIDYHGEKAYLSQSGQLYNEATAMALGRVYCFGPTFRAEKSKTRRHLMEFWMVEAEAAFFDFEDNIRLQEELVSYLVRRVLENNKKELELLRRDTGRLTGVTPPFPRMSYTDAVDFLNSKGVDFKWGDDFGAPHETMISEHFGLPVFIHRFPVDIKAFYMKPDPENPDVVLGADLLAPEGYGEIIGGGQRIDELELLKKRLVQHKLPEEAFEWYLDLRRYGSVPHSGFGLGLERLLAWICGIEHIREAIPFPRMLYRMCP.

This sequence belongs to the class-II aminoacyl-tRNA synthetase family. As to quaternary structure, homodimer.

Its subcellular location is the cytoplasm. The enzyme catalyses tRNA(Asn) + L-asparagine + ATP = L-asparaginyl-tRNA(Asn) + AMP + diphosphate + H(+). This is Asparagine--tRNA ligase from Pelotomaculum thermopropionicum (strain DSM 13744 / JCM 10971 / SI).